Reading from the N-terminus, the 553-residue chain is Formate--tetrahydrofolate ligase (553 aa).

63–70 (TPAGEGKT) serves as a coordination point for ATP.

Belongs to the formate--tetrahydrofolate ligase family.

It catalyses the reaction (6S)-5,6,7,8-tetrahydrofolate + formate + ATP = (6R)-10-formyltetrahydrofolate + ADP + phosphate. Its pathway is one-carbon metabolism; tetrahydrofolate interconversion. This is Formate--tetrahydrofolate ligase from Oenococcus oeni (strain ATCC BAA-331 / PSU-1).